A 242-amino-acid chain; its full sequence is Small ribosomal subunit protein uS3 (242 aa).

Residues 39–109 form the KH type-2 domain; that stretch reads IRQYVEKNLA…QIRINVIEVA (71 aa). The disordered stretch occupies residues 220-242; sequence VPAQAPRRQQRRRQQFEDRSSEG. Residues 233-242 show a composition bias toward basic and acidic residues; sequence QQFEDRSSEG.

The protein belongs to the universal ribosomal protein uS3 family. Part of the 30S ribosomal subunit. Forms a tight complex with proteins S10 and S14.

Binds the lower part of the 30S subunit head. Binds mRNA in the 70S ribosome, positioning it for translation. The protein is Small ribosomal subunit protein uS3 of Microcystis aeruginosa (strain NIES-843 / IAM M-2473).